Reading from the N-terminus, the 1140-residue chain is MSYNYVVTAQKPTAVNACVTGHFTSEDDLNLLIAKNTRLEIYVVTPEGLRPVKEVGMYGKIAVMELFRPKGESKDLLFILTAKYNACILEYKQSGDSIDIITRAHGNVQDRIGRPSETGIIGIIDPDCRMIGLRLYDGLFKVIPLERDNKELKAFNIRLEELHVIDVKFLYSCQAPTICFVYQDPQGRHVKTYEVSLREKEFSKGPWKQENVEAEASMVIAVPEPFGGAIIIGQESITYHNGDKYLAIAPPIIKQSTIVCHNRVDVNGSRYLLGDMEGRLFMLLLEKEEQMDGSVTLKDLRVELLGETSIAECLTYLDNGVVFVGSRLGDSQLVKLTTESNEQGSYVVVMETFTNLGPIVDMCVVDLERQGQGQLVTCSGAFKEGSLRIIRNGIGIHEHASIDLPGIKGLWPLRVAADRDTDDTLVLSFVGQTRVLTLTGEEVEETDLAGFVDDQQTFFCGNVAHQQLIQITSASVRLVSQNPQNLVSEWKEPQGRKVSVCSCNSRQVLLAVGRVLYYLEIHPGELRQTSCTEMEHEVACLDVTPLGGNDTLSSLCAIGLWTDISARILSLPGFQLLHKEMLGGEIIPRSILMTSFESSHYLLCALGDGALFYFSLNTDTGLLSDRKKVTLGTQPTVLRTFRSLSTTNVFACSDRPTVIYSSNHKLVFSNVNLKEVNYMCPLNSEGYPDSLALANNSTLTIGTIDEIQKLHIRTVPLFESPRKICYQEVSQCFGVLSSRIEVQDASGGSSPLRPSASTQALSSSVSCSKLFSGSTSPHETSFGEEVEVHNLLIIDQHTFEVLHTHQFLQNEYTLSLVSCKLGKDPTTYFVVGTAMVYPDEAEPKQGRIVVFQYNDGKLQTVAEKEVKGAVYSMVEFNGKLLASINSTVRLYEWTAEKELRTECNHYNNIMALYLKTKGDFILVGDLMRSVLLLAYKPMEGNFEEIARDFNPNWMSAVEILDDDNFLGAENAFNLFVCQKDSAATTDEERQHLQEVGLFHLGEFVNVFCHGSLVMQNLGETSPPTQGSVLFGTVNGMIGLVTSLSESWYNLLLDVQNRLNKVIKSVGKIEHSFWRSFHTERKTEPATGFIDGDLIESFLDISRPKMQEVIANLQIDDGSGMKRETTVDDLIKVVEELTRIH.

The segment at 13-356 (TAVNACVTGH…VVVMETFTNL (344 aa)) is WD repeat beta-propeller A. The tract at residues 391-708 (RNGIGIHEHA…LTIGTIDEIQ (318 aa)) is WD repeat beta-propeller B; Interaction with CUL4A. Residues 709 to 1043 (KLHIRTVPLF…NGMIGLVTSL (335 aa)) form a WD repeat beta-propeller C region.

This sequence belongs to the DDB1 family. As to quaternary structure, component of the UV-DDB complex which includes ddb1 and ddb2. Component of numerous DCX (DDB1-CUL4-X-box) E3 ubiquitin-protein ligase complexes which consist of a core of ddb1, cul4a or cul4b and rbx1, and a substrate receptor, such as CRBN. DDB1 may recruit specific substrate targeting subunits to the DCX complex. These substrate targeting subunits are generally known as DCAF (DDB1- and CUL4-associated factor) or CDW (CUL4-DDB1-associated WD40-repeat) proteins.

The protein localises to the cytoplasm. It is found in the nucleus. Its pathway is protein modification; protein ubiquitination. Functionally, protein, which is both involved in DNA repair and protein ubiquitination, as part of the UV-DDB complex and DCX (DDB1-CUL4-X-box) complexes, respectively. Core component of the UV-DDB complex (UV-damaged DNA-binding protein complex), a complex that recognizes UV-induced DNA damage and recruit proteins of the nucleotide excision repair pathway (the NER pathway) to initiate DNA repair. The UV-DDB complex may recognize UV-induced DNA damage and recruit proteins of the nucleotide excision repair pathway (the NER pathway) to initiate DNA repair. Also functions as a component of numerous distinct DCX (DDB1-CUL4-X-box) E3 ubiquitin-protein ligase complexes which mediate the ubiquitination and subsequent proteasomal degradation of target proteins. The functional specificity of the DCX E3 ubiquitin-protein ligase complex is determined by the variable substrate recognition component recruited by DDB1. May play a role in the regulation of the circadian clock. The sequence is that of DNA damage-binding protein 1 (ddb1) from Xenopus laevis (African clawed frog).